Consider the following 223-residue polypeptide: Phosphoribosylformylglycinamidine synthase subunit PurQ (223 aa).

Residues 3 to 223 (SAVVQLPGLN…FASALDVIAA (221 aa)) form the Glutamine amidotransferase type-1 domain. C86 functions as the Nucleophile in the catalytic mechanism. Active-site residues include H196 and E198.

As to quaternary structure, part of the FGAM synthase complex composed of 1 PurL, 1 PurQ and 2 PurS subunits.

Its subcellular location is the cytoplasm. It catalyses the reaction N(2)-formyl-N(1)-(5-phospho-beta-D-ribosyl)glycinamide + L-glutamine + ATP + H2O = 2-formamido-N(1)-(5-O-phospho-beta-D-ribosyl)acetamidine + L-glutamate + ADP + phosphate + H(+). It carries out the reaction L-glutamine + H2O = L-glutamate + NH4(+). Its pathway is purine metabolism; IMP biosynthesis via de novo pathway; 5-amino-1-(5-phospho-D-ribosyl)imidazole from N(2)-formyl-N(1)-(5-phospho-D-ribosyl)glycinamide: step 1/2. Part of the phosphoribosylformylglycinamidine synthase complex involved in the purines biosynthetic pathway. Catalyzes the ATP-dependent conversion of formylglycinamide ribonucleotide (FGAR) and glutamine to yield formylglycinamidine ribonucleotide (FGAM) and glutamate. The FGAM synthase complex is composed of three subunits. PurQ produces an ammonia molecule by converting glutamine to glutamate. PurL transfers the ammonia molecule to FGAR to form FGAM in an ATP-dependent manner. PurS interacts with PurQ and PurL and is thought to assist in the transfer of the ammonia molecule from PurQ to PurL. This chain is Phosphoribosylformylglycinamidine synthase subunit PurQ, found in Rhizobium meliloti (strain 1021) (Ensifer meliloti).